The primary structure comprises 569 residues: Proline--tRNA ligase (569 aa).

The protein belongs to the class-II aminoacyl-tRNA synthetase family. ProS type 1 subfamily. As to quaternary structure, homodimer.

It localises to the cytoplasm. It carries out the reaction tRNA(Pro) + L-proline + ATP = L-prolyl-tRNA(Pro) + AMP + diphosphate. Catalyzes the attachment of proline to tRNA(Pro) in a two-step reaction: proline is first activated by ATP to form Pro-AMP and then transferred to the acceptor end of tRNA(Pro). As ProRS can inadvertently accommodate and process non-cognate amino acids such as alanine and cysteine, to avoid such errors it has two additional distinct editing activities against alanine. One activity is designated as 'pretransfer' editing and involves the tRNA(Pro)-independent hydrolysis of activated Ala-AMP. The other activity is designated 'posttransfer' editing and involves deacylation of mischarged Ala-tRNA(Pro). The misacylated Cys-tRNA(Pro) is not edited by ProRS. The chain is Proline--tRNA ligase from Shewanella woodyi (strain ATCC 51908 / MS32).